The chain runs to 233 residues: VIGGDECNINEHRFLALLYSERFQCGGTLINEEWVLTAAHCDMGNMYIYLGVHNVSVQYDDEQRRYPKKKYFCLSSRNYNQWDNDIMLIRLNRPVRNSAHIAPLSLPSGPPSVGSVCRVMGWGTITSPNETYPDVPHCANINILDYEVCRAAYAGLPATSRTLCAGILEGGKDSCRGDSGGPLICNGEIQGIVSWGGNICAQPREPGLYTKVFDYIDWIQSIIAGNTTVNCPP.

The 224-residue stretch at 1 to 224 (VIGGDECNIN…YIDWIQSIIA (224 aa)) folds into the Peptidase S1 domain. 6 disulfides stabilise this stretch: Cys-7–Cys-138, Cys-25–Cys-41, Cys-73–Cys-231, Cys-117–Cys-185, Cys-149–Cys-164, and Cys-175–Cys-200. The active-site Charge relay system is His-40. The N-linked (GlcNAc...) asparagine glycan is linked to Asn-54. Asp-85 serves as the catalytic Charge relay system. Asn-129 carries N-linked (GlcNAc...) asparagine glycosylation. The short motif at 176 to 178 (RGD) is the Cell attachment site element. Ser-179 acts as the Charge relay system in catalysis. Asn-226 carries an N-linked (GlcNAc...) asparagine glycan.

This sequence belongs to the peptidase S1 family. Snake venom subfamily. Heterodimer of the brevinase A chain and the brevinase B chain. In terms of tissue distribution, expressed by the venom gland.

Its subcellular location is the secreted. The fibrinolytic activity is completely inhibited by PMSF, diisopropylfluorophosphate (DFP), pefabloc, dithiothreitol (DTT) and Zn(2+), but not by Pepstatin A, E64, iodoacetate, chymostatin, tosyl-Lphenylalanine chloromethyl ketone (TPCK), soybean trypsin inhibitor (SBTI), phosphoramidon, Ca(2+), Co(2+), Cu(2+), Fe(2+), Mg(2+), Mn(2+), K(+), and Na(+). Functionally, snake venom serine protease that has fibrinogenolytic activities. Preferentially cleaves the Bbeta-chain (FGB) and more slowly the Aa-chain (FGA) of fibrinogen, but does not affect the gamma-chain. Also has fibrinolytic activity. May play a role in antithrombotic reaction as well as thrombolytic reaction. The sequence is that of Beta-fibrinogenase brevinase from Gloydius blomhoffii (Mamushi).